A 127-amino-acid polypeptide reads, in one-letter code: Small ribosomal subunit protein uS11 (127 aa).

This sequence belongs to the universal ribosomal protein uS11 family. As to quaternary structure, part of the 30S ribosomal subunit. Interacts with proteins S7 and S18. Binds to IF-3.

Its function is as follows. Located on the platform of the 30S subunit, it bridges several disparate RNA helices of the 16S rRNA. Forms part of the Shine-Dalgarno cleft in the 70S ribosome. This Streptococcus pyogenes serotype M1 protein is Small ribosomal subunit protein uS11.